Here is a 302-residue protein sequence, read N- to C-terminus: HTH-type transcriptional regulator ArgP (302 aa).

The region spanning 4–60 (PDYRTLQALDAVIRERGFERAAQKLCITQSAVSQRIKQLENLFGQPLLVRTVPPRPT) is the HTH lysR-type domain. Positions 21–40 (FERAAQKLCITQSAVSQRIK) form a DNA-binding region, H-T-H motif.

Belongs to the LysR transcriptional regulatory family. Homodimer.

Its function is as follows. Controls the transcription of genes involved in arginine and lysine metabolism. This chain is HTH-type transcriptional regulator ArgP, found in Yersinia pseudotuberculosis serotype O:1b (strain IP 31758).